The chain runs to 265 residues: Apolipoprotein A-I (265 aa).

Residues 1 to 18 form the signal peptide; sequence MKAVVLTLAVLFLTGSQA. 2 repeat units span residues 67–88 and 89–110. A 10 X approximate tandem repeats region spans residues 67 to 265; that stretch reads LKLLDNWDSL…DEASKKLNAQ (199 aa). Residue M109 is modified to Methionine sulfoxide. The 3; half-length repeat unit spans residues 111–121; sequence KDLQEVKQKVQ. Tandem repeats lie at residues 122–142, 144–165, 166–187, 188–209, and 210–230. The stretch at 231-241 is one 9; half-length repeat; sequence PALEDLRQGLL. The stretch at 242-265 is repeat 10; that stretch reads PVLENLKVSILAAIDEASKKLNAQ.

It belongs to the apolipoprotein A1/A4/E family. Homodimer. Interacts with APOA1BP and CLU. Component of a sperm activating protein complex (SPAP), consisting of APOA1, an immunoglobulin heavy chain, an immunoglobulin light chain and albumin. Interacts with NDRG1. Interacts with SCGB3A2. Interacts with NAXE and YJEFN3. In terms of processing, glycosylated. Post-translationally, palmitoylated. Phosphorylation sites are present in the extracellular medium. Major protein of plasma HDL, also found in chylomicrons.

The protein localises to the secreted. Functionally, participates in the reverse transport of cholesterol from tissues to the liver for excretion by promoting cholesterol efflux from tissues and by acting as a cofactor for the lecithin cholesterol acyltransferase (LCAT). As part of the SPAP complex, activates spermatozoa motility. This chain is Apolipoprotein A-I (APOA1), found in Balaenoptera acutorostrata scammoni (North Pacific minke whale).